Reading from the N-terminus, the 863-residue chain is Oleate activated transcription factor 3 (863 aa).

The segment at residues 19 to 47 is a DNA-binding region (zn(2)-C6 fungal-type); it reads CTNCKKRKSKCDRTKPCGTCVRLGDVDSC. Over residues 52–63 the composition is skewed to polar residues; the sequence is DSSGQPESSPSL. The segment at 52-99 is disordered; it reads DSSGQPESSPSLNDADPLRKQSTPAERISPGFIKKRRSSQTRQDEDHW.

It belongs to the OAF3 family.

Its subcellular location is the cytoplasm. The protein localises to the nucleus. It localises to the mitochondrion. Transcriptional inhibitor with a significantly increased number of target genes in response to oleate. This is Oleate activated transcription factor 3 (OAF3) from Saccharomyces cerevisiae (strain YJM789) (Baker's yeast).